The sequence spans 580 residues: Cleavage stimulation factor subunit 2 (580 aa).

A Phosphoserine modification is found at serine 14. The region spanning arginine 16–serine 94 is the RRM domain. The interactions with CSTF3 and SYMPK stretch occupies residues alanine 108 to alanine 248. Lysine 189 participates in a covalent cross-link: Glycyl lysine isopeptide (Lys-Gly) (interchain with G-Cter in SUMO2). Arginine 308 is subject to Omega-N-methylarginine. Disordered stretches follow at residues leucine 311–glycine 331 and leucine 347–aspartate 414. Basic and acidic residues-rich tracts occupy residues proline 363–arginine 376 and arginine 405–aspartate 414. A 1; approximate repeat occupies leucine 413 to glycine 417. The segment at leucine 413–glycine 472 is 12 X 5 AA tandem repeats of M-E-A-R-[AG]. 2 consecutive repeat copies span residues methionine 418–alanine 422 and methionine 423–glycine 427. The 4; approximate repeat unit spans residues leucine 428–glycine 432. One copy of the 5; approximate repeat lies at leucine 433–alanine 437. 6 tandem repeats follow at residues methionine 438 to alanine 442, methionine 443 to alanine 447, methionine 448 to alanine 452, methionine 453 to alanine 457, methionine 458 to alanine 462, and methionine 463 to glycine 467. One copy of the 12; approximate repeat lies at methionine 468–glycine 472. Omega-N-methylarginine occurs at positions 471 and 478. Residues methionine 512–glutamine 536 form a disordered region. The interaction with RPO2TC1 stretch occupies residues methionine 517 to proline 580. Phosphoserine is present on residues serine 521 and serine 527.

The CSTF complex is composed of CSTF1 (50 kDa subunit), CSTF2 (64 kDa subunit) and CSTF3 (77 kDa subunit). CSTF2 directly interacts with CSTF3, SYMPK and RPO2TC1. Interacts with HSF1 in heat-stressed cells. Interacts with CPSF2, CPSF3 and FIP1L1. Interacts with DDX1. Expressed in most somatic cell types (at protein level). Highly expressed in testis, except in meiotic spermatocytes.

The protein resides in the nucleus. In terms of biological role, one of the multiple factors required for polyadenylation and 3'-end cleavage of mammalian pre-mRNAs. This subunit is directly involved in the binding to pre-mRNAs. This chain is Cleavage stimulation factor subunit 2 (Cstf2), found in Mus musculus (Mouse).